The sequence spans 150 residues: Transthyretin (150 aa).

An N-terminal signal peptide occupies residues 1-20; the sequence is MAFHSTLLVFLAGLVFLSEA. Sulfocysteine is present on C33. L-thyroxine contacts are provided by K38, E77, and S140.

This sequence belongs to the transthyretin family. In terms of assembly, homotetramer. Dimer of dimers. In the homotetramer, subunits assemble around a central channel that can accommodate two ligand molecules. In terms of processing, sulfonation of the reactive cysteine Cys-33 enhances the stability of the native conformation of TTR, avoiding misassembly of the protein leading to amyloid formation. As to expression, detected in serum (at protein level). Detected in liver and choroid plexus.

The protein localises to the secreted. Its function is as follows. Thyroid hormone-binding protein. Probably transports thyroxine from the bloodstream to the brain. The polypeptide is Transthyretin (TTR) (Gallus gallus (Chicken)).